We begin with the raw amino-acid sequence, 164 residues long: Peptidyl-prolyl cis-trans isomerase A (164 aa).

N-acetylmethionine is present on M1. An N-acetylvaline; in Peptidyl-prolyl cis-trans isomerase A, N-terminally processed modification is found at V2. A PPIase cyclophilin-type domain is found at F7–Q163. N6-acetyllysine; alternate is present on K28. K28 is covalently cross-linked (Glycyl lysine isopeptide (Lys-Gly) (interchain with G-Cter in SUMO2); alternate). A Glycyl lysine isopeptide (Lys-Gly) (interchain with G-Cter in ubiquitin); alternate cross-link involves residue K28. N6-acetyllysine occurs at positions 44 and 76. A Phosphoserine modification is found at S77. K82 carries the post-translational modification N6-acetyllysine; alternate. K82 is covalently cross-linked (Glycyl lysine isopeptide (Lys-Gly) (interchain with G-Cter in SUMO2); alternate). T93 is subject to Phosphothreonine. A glycan (N-linked (GlcNAc...) asparagine) is linked at N108. An N6-acetyllysine mark is found at K125, K131, and K133.

It belongs to the cyclophilin-type PPIase family. PPIase A subfamily. In terms of assembly, interacts with protein phosphatase PPP3CA/calcineurin A. Interacts with isoform 2 of BSG/CD147. Interacts with FOXO1; the interaction promotes FOXO1 dephosphorylation, nuclear accumulation and transcriptional activity. Interacts with integrin ITGA2B:ITGB3; the interaction is ROS and peptidyl-prolyl cis-trans isomerase (PPIase) activity-dependent and is increased in the presence of thrombin. Interacts with MAP3K5. Interacts with TARDBP; the interaction is dependent on the RNA-binding activity of TARDBP and the PPIase activity of PPIA/CYPA and the acetylation of PPIA/CYPA at Lys-125 favors the interaction. Interacts with HNRNPA1, HNRNPA2B1, HNRNPC, RBMX, HNRNPK and HNRNPM. Post-translationally, acetylation at Lys-125 markedly inhibits catalysis of cis to trans isomerization. PPIA acetylation also antagonizes the immunosuppressive effects of cyclosporine by inhibiting the sequential steps of cyclosporine binding and calcineurin inhibition. Acetylation at Lys-125 favors the interaction with TARDBP.

The protein resides in the cytoplasm. The protein localises to the secreted. Its subcellular location is the nucleus. The enzyme catalyses [protein]-peptidylproline (omega=180) = [protein]-peptidylproline (omega=0). With respect to regulation, binds cyclosporin A (CsA). CsA mediates some of its effects via an inhibitory action on PPIase. Catalyzes the cis-trans isomerization of proline imidic peptide bonds in oligopeptides. Exerts a strong chemotactic effect on leukocytes partly through activation of one of its membrane receptors BSG/CD147, initiating a signaling cascade that culminates in MAPK/ERK activation. Activates endothelial cells (ECs) in a proinflammatory manner by stimulating activation of NF-kappa-B and ERK, JNK and p38 MAP-kinases and by inducing expression of adhesion molecules including SELE and VCAM1. Induces apoptosis in ECs by promoting the FOXO1-dependent expression of CCL2 and BCL2L11 which are involved in EC chemotaxis and apoptosis. In response to oxidative stress, initiates proapoptotic and antiapoptotic signaling in ECs via activation of NF-kappa-B and AKT1 and up-regulation of antiapoptotic protein BCL2. Negatively regulates MAP3K5/ASK1 kinase activity, autophosphorylation and oxidative stress-induced apoptosis mediated by MAP3K5/ASK1. Necessary for the assembly of TARDBP in heterogeneous nuclear ribonucleoprotein (hnRNP) complexes and regulates TARDBP binding to RNA UG repeats and TARDBP-dependent expression of HDAC6, ATG7 and VCP which are involved in clearance of protein aggregates. Plays an important role in platelet activation and aggregation. Regulates calcium mobilization and integrin ITGA2B:ITGB3 bidirectional signaling via increased ROS production as well as by facilitating the interaction between integrin and the cell cytoskeleton. Binds heparan sulfate glycosaminoglycans. The sequence is that of Peptidyl-prolyl cis-trans isomerase A (PPIA) from Saguinus oedipus (Cotton-top tamarin).